Here is a 141-residue protein sequence, read N- to C-terminus: Nucleoside diphosphate kinase (141 aa).

Residues K11, F59, R87, T93, R104, and N114 each coordinate ATP. H117 acts as the Pros-phosphohistidine intermediate in catalysis.

The protein belongs to the NDK family. As to quaternary structure, homotetramer. Requires Mg(2+) as cofactor.

The protein resides in the cytoplasm. It catalyses the reaction a 2'-deoxyribonucleoside 5'-diphosphate + ATP = a 2'-deoxyribonucleoside 5'-triphosphate + ADP. The catalysed reaction is a ribonucleoside 5'-diphosphate + ATP = a ribonucleoside 5'-triphosphate + ADP. Major role in the synthesis of nucleoside triphosphates other than ATP. The ATP gamma phosphate is transferred to the NDP beta phosphate via a ping-pong mechanism, using a phosphorylated active-site intermediate. The sequence is that of Nucleoside diphosphate kinase from Vibrio campbellii (strain ATCC BAA-1116).